Reading from the N-terminus, the 747-residue chain is MGHVTSPSKRYPASFKRAGSILGVSIALAAFSNVAAAGCEYVVTNSWGSGFTAAIRITNSTSSVINGWNVSWQYNSNRVTNLWNANLSGSNPYSASNLSWNGTIQPGQTVEFGFQGVTNSGTVESPTVNGAACTGGTSSSVSSSSVVSSSSSSRSSVSSSSVVSSSSSVVSSSSSSVVSGGQCNWYGTLYPLCVSTTSGWGYENNRSCISPSTCSAQPAPYGIVGGSSSPSSISSSSVRSSSSSSVVPPSSSSSSSVPSSSSSSVSSSSVVSSSSSSVSVPGTGVFRVNTQGNLTKDGQLLPARCGNWFGLEGRHEPSNDADNPSGAPMELYAGNMWWVNNSQGSGRTIQQTMTELKQQGITMLRLPIAPQTLDANDPQGRSPNLKNHQSIRQSNARQALEDFIKLADQNDIQIFIDIHSCSNYVGWRAGRLDARPPYVDANRVGYDFTREEYSCSATNNPSSVTRIHAYDKQKWLANLREIAGLSAKLGVSNLIGIDVFNEPYDYTWAEWKGMVEEAYQAINEVNPNMLIIVEGISANANTQDGTPDTSVPVPHGSTDLNPNWGENLYEAGANPPNIPKDRLLFSPHTYGPSVFVQRQFMDPAQTECAGLEGDEAAQARCRIVINPTVLEQGWEEHFGYLRELGYGILIGEFGGNMDWPGAKSSQADRNAWSHITTNVDQQWQQAAASYFKRKGINACYWSMNPESADTMGWYLTPWDPVTANDMWGQWTGFDPRKTQLLHNMWGL.

The N-terminal stretch at M1–A37 is a signal peptide. The region spanning G38 to G136 is the CBM2 domain. Disulfide bonds link C39–C133, C183–C214, and C193–C208. One can recognise a CBM10 domain in the interval Q182–P211. The disordered stretch occupies residues G226 to T283. The segment covering S227–P281 has biased composition (low complexity). Residues V280–L747 are catalytic. The Proton donor role is filled by E502. The active-site Nucleophile is E652.

The protein belongs to the glycosyl hydrolase 5 (cellulase A) family.

It catalyses the reaction Endohydrolysis of (1-&gt;4)-beta-D-glucosidic linkages in cellulose, lichenin and cereal beta-D-glucans.. The sequence is that of Endoglucanase C (celC) from Cellvibrio japonicus (strain Ueda107) (Pseudomonas fluorescens subsp. cellulosa).